We begin with the raw amino-acid sequence, 187 residues long: Fibroblast growth factor 4A (187 aa).

Residues M1–C22 form the signal peptide.

This sequence belongs to the heparin-binding growth factors family.

The protein localises to the secreted. Its function is as follows. Plays an important role in the regulation of embryonic development, cell proliferation, and cell differentiation. Good candidate for an inducing factor with possible roles both in mesoderm induction at the blastula stage and in the formation of the anteroposterior axis at the gastrula stage. This Xenopus laevis (African clawed frog) protein is Fibroblast growth factor 4A (fgf4-a).